The sequence spans 513 residues: Protein CYCLOPS (513 aa).

2 disordered regions span residues 329-380 (QGRT…STQN) and 395-435 (DDRK…AEAK). Positions 333–347 (ASGEPSQSESSAAAP) are enriched in low complexity. Polar residues predominate over residues 359–380 (PSNSNQTLGDSSWKQVGESTQN). 2 consecutive short sequence motifs (nuclear localization signal) follow at residues 397–400 (RKRK) and 421–424 (KKRR). Residues 447–513 (MQAILKRCEN…ERILSETGKI (67 aa)) are a coiled coil.

This sequence belongs to the CYCLOPS family. In terms of assembly, forms homodimers. Interacts with CCAMK. Highly expressed in roots. Expressed in root hairs and nodules. Not detected in leaves or flowers.

The protein resides in the nucleus. Involved symbiotic signaling. Required for root infection by symbiotic rhizobia, infection thread (IT) formation, and nodule development. Required for proper induction of early nodulin gene expression. Probably not involved in nodule organogenesis. Involved in arbuscular mycorrhizal (AM) symbiosis. Required for fungal infection of the outer cortical cell layers, and for arbuscule development during the AM symbiosis. Acts downstream of CCAMK. Required for symbiosome formation (i.e. the release of the bacteria from the ITs) and subsequent symbiosome development. Required for the expression of the nodule-specific RPG gene, which controls proper IT growth and is essential for symbiosome formation. Acts upstream of ERN1, a transcriptional regulator required for nodulation. In Medicago truncatula (Barrel medic), this protein is Protein CYCLOPS.